A 557-amino-acid polypeptide reads, in one-letter code: Probable tRNA-splicing endonuclease subunit tsp-5 (557 aa).

Disordered regions lie at residues 1–36, 131–152, 225–252, 370–403, and 514–557; these read MPLD…MMDE, KLTK…DRKL, SVPA…EDDD, PSST…SDSP, and SGGP…GRGN. A compositionally biased stretch (basic and acidic residues) spans 131 to 140; the sequence is KLTKRGKEGA. Over residues 370–381 the composition is skewed to low complexity; sequence PSSTSSSASPTA. Composition is skewed to gly residues over residues 517 to 527 and 538 to 549; these read PRRGGGGGGKK and GRGGGRGGGRGG.

It belongs to the SEN54 family. TRNA splicing endonuclease is a heterotetramer composed of tsp-2/sen2, tsp-1/sen15, tsp-4/sen34 and tsp-5/sen54. Interacts directly with tsp-2/sen2.

In terms of biological role, non-catalytic subunit of the tRNA-splicing endonuclease complex, a complex responsible for identification and cleavage of the splice sites in pre-tRNA. It cleaves pre-tRNA at the 5' and 3' splice sites to release the intron. The products are an intron and two tRNA half-molecules bearing 2',3' cyclic phosphate and 5'-OH termini. There are no conserved sequences at the splice sites, but the intron is invariably located at the same site in the gene, placing the splice sites an invariant distance from the constant structural features of the tRNA body. May be required to embody the molecular ruler of the complex. The chain is Probable tRNA-splicing endonuclease subunit tsp-5 (tsp-5) from Neurospora crassa (strain ATCC 24698 / 74-OR23-1A / CBS 708.71 / DSM 1257 / FGSC 987).